We begin with the raw amino-acid sequence, 324 residues long: Methenyltetrahydromethanopterin cyclohydrolase (324 aa).

Belongs to the MCH family.

It localises to the cytoplasm. The catalysed reaction is 5,10-methenyl-5,6,7,8-tetrahydromethanopterin + H2O = N(5)-formyl-5,6,7,8-tetrahydromethanopterin + H(+). It participates in one-carbon metabolism; methanogenesis from CO(2); 5,10-methenyl-5,6,7,8-tetrahydromethanopterin from CO(2): step 3/3. Its function is as follows. Catalyzes the reversible interconversion of 5-formyl-H(4)MPT to methenyl-H(4)MPT(+). The polypeptide is Methenyltetrahydromethanopterin cyclohydrolase (Methanococcus aeolicus (strain ATCC BAA-1280 / DSM 17508 / OCM 812 / Nankai-3)).